We begin with the raw amino-acid sequence, 114 residues long: Holo-[acyl-carrier-protein] synthase (114 aa).

2 residues coordinate Mg(2+): aspartate 5 and glutamate 50.

It belongs to the P-Pant transferase superfamily. AcpS family. Requires Mg(2+) as cofactor.

It localises to the cytoplasm. The catalysed reaction is apo-[ACP] + CoA = holo-[ACP] + adenosine 3',5'-bisphosphate + H(+). Functionally, transfers the 4'-phosphopantetheine moiety from coenzyme A to a Ser of acyl-carrier-protein. The chain is Holo-[acyl-carrier-protein] synthase from Campylobacter curvus (strain 525.92).